The chain runs to 344 residues: Phosphoribosylformylglycinamidine cyclo-ligase (344 aa).

It belongs to the AIR synthase family.

It is found in the cytoplasm. The catalysed reaction is 2-formamido-N(1)-(5-O-phospho-beta-D-ribosyl)acetamidine + ATP = 5-amino-1-(5-phospho-beta-D-ribosyl)imidazole + ADP + phosphate + H(+). It participates in purine metabolism; IMP biosynthesis via de novo pathway; 5-amino-1-(5-phospho-D-ribosyl)imidazole from N(2)-formyl-N(1)-(5-phospho-D-ribosyl)glycinamide: step 2/2. This chain is Phosphoribosylformylglycinamidine cyclo-ligase, found in Leptospira interrogans serogroup Icterohaemorrhagiae serovar Lai (strain 56601).